Consider the following 499-residue polypeptide: U4/U6 small nuclear ribonucleoprotein Prp31 (499 aa).

A disordered region spans residues Met-1–Leu-43. The span at Leu-7–Gln-40 shows a compositional bias: acidic residues. Coiled-coil stretches lie at residues Glu-85 to Lys-120 and Asp-181 to Ile-215. The region spanning Ile-215–Glu-333 is the Nop domain. The disordered stretch occupies residues Pro-334 to Arg-357. The Nuclear localization signal (NLS) motif lies at Arg-351–Glu-364. Phosphoserine occurs at positions 379, 395, and 432. Lys-438 is modified (N6-acetyllysine). At Ser-439 the chain carries Phosphoserine. A Phosphothreonine modification is found at Thr-440. Ser-450 is subject to Phosphoserine. Residue Thr-455 is modified to Phosphothreonine. Glycyl lysine isopeptide (Lys-Gly) (interchain with G-Cter in SUMO2) cross-links involve residues Lys-471 and Lys-478.

The protein belongs to the PRP31 family. In terms of assembly, identified in the spliceosome B complex. Component of the U4/U6-U5 tri-snRNP complex composed of the U4, U6 and U5 snRNAs and at least PRPF3, PRPF4, PRPF6, PRPF8, PRPF31, SNRNP200, TXNL4A, SNRNP40, DDX23, CD2BP2, PPIH, SNU13, EFTUD2, SART1 and USP39. Interacts with a complex formed by SNU13 and U4 snRNA, but not with SNU13 or U4 snRNA alone. The complex formed by SNU13 and PRPF31 also binds U4atac snRNA, a characteristic component of specific, less abundant spliceosomal complexes. Interacts with PRPF6/U5 snRNP-associated 102 kDa protein. Component of some MLL1/MLL complex, at least composed of the core components KMT2A/MLL1, ASH2L, HCFC1/HCF1, WDR5 and RBBP5, as well as the facultative components BACC1, CHD8, E2F6, HSP70, INO80C, KANSL1, LAS1L, MAX, MCRS1, MGA, KAT8/MOF, PELP1, PHF20, PRP31, RING2, RUVB1/TIP49A, RUVB2/TIP49B, SENP3, TAF1, TAF4, TAF6, TAF7, TAF9 and TEX10. Interacts (via its NLS) with CTNNBL1. Interacts with USH1G. In terms of processing, phosphorylated by PRP4K during spliceosome assembly.

Its subcellular location is the nucleus. It is found in the nucleus speckle. The protein resides in the cajal body. Involved in pre-mRNA splicing as component of the spliceosome. Required for the assembly of the U4/U5/U6 tri-snRNP complex, one of the building blocks of the spliceosome. In Mus musculus (Mouse), this protein is U4/U6 small nuclear ribonucleoprotein Prp31 (Prpf31).